Consider the following 1551-residue polypeptide: UDP-glucose:glycoprotein glucosyltransferase 1 (1551 aa).

A signal peptide spans 1 to 42; it reads MCSRGDANAAGAAAARRVTGLCYNMGLLIALALLCLFSLAEA. 4 N-linked (GlcNAc...) asparagine glycosylation sites follow: Asn269, Asn536, Asn1015, and Asn1228. The tract at residues 1244–1551 is glucosyltransferase; sequence KTEEVKQDKD…QEGSQKHEEL (308 aa). Ser1277 bears the Phosphoserine mark. Positions 1531–1551 are disordered; it reads KELGTLHEEETQEGSQKHEEL. Positions 1548-1551 match the Prevents secretion from ER motif; the sequence is HEEL.

This sequence belongs to the glycosyltransferase 8 family. As to quaternary structure, monomer as well as in a tight complex with SELENOF. Interacts with METTL23. Part of a large chaperone multiprotein complex comprising DNAJB11, HSP90B1, HSPA5, HYOU, PDIA2, PDIA4, PDIA6, PPIB, SDF2L1, UGGT1 and very small amounts of ERP29, but not, or at very low levels, CALR nor CANX. It depends on Ca(2+) as a cofactor.

Its subcellular location is the endoplasmic reticulum lumen. The protein localises to the endoplasmic reticulum-Golgi intermediate compartment. It carries out the reaction N(4)-(alpha-D-Man-(1-&gt;2)-alpha-D-Man-(1-&gt;2)-alpha-D-Man-(1-&gt;3)-[alpha-D-Man-(1-&gt;2)-alpha-D-Man-(1-&gt;3)-[alpha-D-Man-(1-&gt;2)-alpha-D-Man-(1-&gt;6)]-alpha-D-Man-(1-&gt;6)]-beta-D-Man-(1-&gt;4)-beta-D-GlcNAc-(1-&gt;4)-beta-D-GlcNAc)-L-asparaginyl-[protein] (N-glucan mannose isomer 9A1,2,3B1,2,3) + UDP-alpha-D-glucose = N(4)-(alpha-D-Glc-(1-&gt;3)-alpha-D-Man-(1-&gt;2)-alpha-D-Man-(1-&gt;2)-alpha-D-Man-(1-&gt;3)-[alpha-D-Man-(1-&gt;2)-alpha-D-Man-(1-&gt;3)-[alpha-D-Man-(1-&gt;2)-alpha-D-Man-(1-&gt;6)]-alpha-D-Man-(1-&gt;6)]-beta-D-Man-(1-&gt;4)-beta-D-GlcNAc-(1-&gt;4)-beta-D-GlcNAc)-L-asparaginyl-[protein] + UDP + H(+). It functions in the pathway protein modification; protein glycosylation. Recognizes glycoproteins with minor folding defects. Reglucosylates single N-glycans near the misfolded part of the protein, thus providing quality control for protein folding in the endoplasmic reticulum. Reglucosylated proteins are recognized by calreticulin for recycling to the endoplasmic reticulum and refolding or degradation. The protein is UDP-glucose:glycoprotein glucosyltransferase 1 (Uggt1) of Rattus norvegicus (Rat).